Here is a 288-residue protein sequence, read N- to C-terminus: UPF0761 membrane protein HS_0693 (288 aa).

A run of 6 helical transmembrane segments spans residues 36–56, 92–112, 127–147, 176–196, 200–220, and 240–260; these read TLALVPLIMVFFSVFAAFPVF, QMSAVGIISLIVVALMLIHSI, PAIFSFAIYWLILTLGPIVIA, LLSLMPFFLTWFIFTVLYMVV, KVSIIHSAAGALIAAVFFTLG, and AMATLPIMLLWIQLSWTAVLL.

This sequence belongs to the UPF0761 family.

The protein resides in the cell inner membrane. The sequence is that of UPF0761 membrane protein HS_0693 from Histophilus somni (strain 129Pt) (Haemophilus somnus).